The chain runs to 268 residues: Aliphatic sulfonates import ATP-binding protein SsuB (268 aa).

Residues 15-236 (LAVRNLQKTF…VRGSHRLAAL (222 aa)) form the ABC transporter domain. Residue 47 to 54 (GRSGCGKS) coordinates ATP.

This sequence belongs to the ABC transporter superfamily. Aliphatic sulfonates importer (TC 3.A.1.17.2) family. The complex is composed of two ATP-binding proteins (SsuB), two transmembrane proteins (SsuC) and a solute-binding protein (SsuA).

It is found in the cell inner membrane. The enzyme catalyses ATP + H2O + aliphatic sulfonate-[sulfonate-binding protein]Side 1 = ADP + phosphate + aliphatic sulfonateSide 2 + [sulfonate-binding protein]Side 1.. Its function is as follows. Part of the ABC transporter complex SsuABC involved in aliphatic sulfonates import. Responsible for energy coupling to the transport system. The protein is Aliphatic sulfonates import ATP-binding protein SsuB of Pseudomonas fluorescens (strain Pf0-1).